Reading from the N-terminus, the 490-residue chain is Katanin p60 ATPase-containing subunit A-like 1 (490 aa).

Methionine 1 carries the N-acetylmethionine modification. Residues 95–184 are disordered; sequence DPAVWPPPVP…DGEMPKFDGA (90 aa). The span at 116 to 127 shows a compositional bias: basic and acidic residues; it reads PNREVRPLRKEM. A compositionally biased stretch (low complexity) spans 128–139; it reads AGVGARGPVGRA. The segment covering 143–169 has biased composition (basic and acidic residues); sequence SKSEKPSTSRDKDCRARGRDDKGRKNM. The residue at position 174 (serine 174) is a Phosphoserine. 248–255 provides a ligand contact to ATP; sequence GPPGTGKT.

The protein belongs to the AAA ATPase family. Katanin p60 subunit A1 subfamily. A-like 1 sub-subfamily. In terms of assembly, interacts with KATNB1 and KATNBL1.

The protein resides in the cytoplasm. It is found in the cytoskeleton. It localises to the spindle pole. The protein localises to the spindle. The catalysed reaction is n ATP + n H2O + a microtubule = n ADP + n phosphate + (n+1) alpha/beta tubulin heterodimers.. Its function is as follows. Regulates microtubule dynamics in Sertoli cells, a process that is essential for spermiogenesis and male fertility. Severs microtubules in an ATP-dependent manner, promoting rapid reorganization of cellular microtubule arrays. Has microtubule-severing activity in vitro. The sequence is that of Katanin p60 ATPase-containing subunit A-like 1 from Papio anubis (Olive baboon).